Consider the following 509-residue polypeptide: MRPIPRTMSTQHPDNATVPEWAKGDVIEGEAEVIEAYYAFSRLNVHEVMWDAEGKDVDTHVVRKLFSSFDEYFKNNILGEDIFLTYRLPNPKIEGAERKVFAETMESIPITFDVAERFYGRKVVPVFEVILPFTTNASDIISVARYYERAVAMEENIELQDGVYVRDLVGEIYPKRIEVIPLIEDKDSLLNTRNIIEGYYRAIKPSYMRLFIARSDPAMNYGMLTAVLLAKYALSEAGKLAEELGIPIFPIIGVGSLPFRGHLSPENYQRVMEEYEGVYTFTIQSAFKYDYSEEQVKGAISHINREEVKEPRILGEEEKKVTRDIIETYTLSYQPVIESLANLINTVALHLPRRRARKLHISLFGYARSTGKVMLPRAITFVGSLYSVGLPPEVIGISSLGKLNEMQWNILEENYKFLKNDLQKASEFINPEGLSTLVSYGYLDAEISKKLEEDIKYLESMGVKIGPRSYETKKHALLSQLLMLSLKEKKYNEVKQYAREMAVIRKSIG.

It belongs to the PEPCase type 2 family. In terms of assembly, homotetramer. Mg(2+) is required as a cofactor.

It carries out the reaction oxaloacetate + phosphate = phosphoenolpyruvate + hydrogencarbonate. Functionally, catalyzes the irreversible beta-carboxylation of phosphoenolpyruvate (PEP) to form oxaloacetate (OAA), a four-carbon dicarboxylic acid source for the tricarboxylic acid cycle. In Metallosphaera sedula (strain ATCC 51363 / DSM 5348 / JCM 9185 / NBRC 15509 / TH2), this protein is Phosphoenolpyruvate carboxylase.